The primary structure comprises 74 residues: uncharacterized protein (74 aa).

This is an uncharacterized protein from Homo sapiens (Human).